Here is a 128-residue protein sequence, read N- to C-terminus: Anti-sigma-F factor antagonist RsfA (128 aa).

Residues 17 to 128 form the STAS domain; that stretch reads LKATIQHHDS…PTTESALSAT (112 aa). Residues Cys73 and Cys109 are joined by a disulfide bond.

Belongs to the anti-sigma-factor antagonist family. As to quaternary structure, monomer. Interacts with anti-sigma-F factor RsbW (UsfX).

Its function is as follows. Positive, redox-sensitive regulator of sigma-F (SigF) activity. When reduced binds to anti-sigma-F factor RsbW (UsfX) preventing its binding to SigF, thus activating transcription. The polypeptide is Anti-sigma-F factor antagonist RsfA (rsfA) (Mycobacterium tuberculosis (strain CDC 1551 / Oshkosh)).